Consider the following 84-residue polypeptide: ATP synthase subunit c (84 aa).

2 helical membrane-spanning segments follow: residues 10–30 and 53–73; these read IAVGIIVGLASLGTAIGFALL and FIIAGLLDAVPMIGIVIALLF.

It belongs to the ATPase C chain family. As to quaternary structure, F-type ATPases have 2 components, F(1) - the catalytic core - and F(0) - the membrane proton channel. F(1) has five subunits: alpha(3), beta(3), gamma(1), delta(1), epsilon(1). F(0) has three main subunits: a(1), b(2) and c(10-14). The alpha and beta chains form an alternating ring which encloses part of the gamma chain. F(1) is attached to F(0) by a central stalk formed by the gamma and epsilon chains, while a peripheral stalk is formed by the delta and b chains.

The protein localises to the cell inner membrane. Its function is as follows. F(1)F(0) ATP synthase produces ATP from ADP in the presence of a proton or sodium gradient. F-type ATPases consist of two structural domains, F(1) containing the extramembraneous catalytic core and F(0) containing the membrane proton channel, linked together by a central stalk and a peripheral stalk. During catalysis, ATP synthesis in the catalytic domain of F(1) is coupled via a rotary mechanism of the central stalk subunits to proton translocation. Functionally, key component of the F(0) channel; it plays a direct role in translocation across the membrane. A homomeric c-ring of between 10-14 subunits forms the central stalk rotor element with the F(1) delta and epsilon subunits. In Vibrio alginolyticus, this protein is ATP synthase subunit c.